We begin with the raw amino-acid sequence, 692 residues long: Elongation factor G (692 aa).

The tr-type G domain occupies D9–L283. GTP-binding positions include A18–T25, D82–H86, and N136–D139.

The protein belongs to the TRAFAC class translation factor GTPase superfamily. Classic translation factor GTPase family. EF-G/EF-2 subfamily.

The protein localises to the cytoplasm. In terms of biological role, catalyzes the GTP-dependent ribosomal translocation step during translation elongation. During this step, the ribosome changes from the pre-translocational (PRE) to the post-translocational (POST) state as the newly formed A-site-bound peptidyl-tRNA and P-site-bound deacylated tRNA move to the P and E sites, respectively. Catalyzes the coordinated movement of the two tRNA molecules, the mRNA and conformational changes in the ribosome. This is Elongation factor G (fusA) from Thermotoga maritima (strain ATCC 43589 / DSM 3109 / JCM 10099 / NBRC 100826 / MSB8).